The primary structure comprises 227 residues: Transcriptional regulatory protein CusR (227 aa).

A Response regulatory domain is found at 2–116; the sequence is KLLIVEDEKK…ELLARVRTLL (115 aa). At D51 the chain carries 4-aspartylphosphate. The ompR/PhoB-type DNA-binding region spans 125 to 223; it reads ESQFQVADLM…VRGVGYMLEV (99 aa).

Post-translationally, phosphorylated by CusS.

Its subcellular location is the cytoplasm. Member of the two-component regulatory system CusS/CusR involved in response to copper and silver. The protein is Transcriptional regulatory protein CusR (cusR) of Escherichia coli O6:H1 (strain CFT073 / ATCC 700928 / UPEC).